Reading from the N-terminus, the 207-residue chain is Cytochrome c biogenesis ATP-binding export protein CcmA (207 aa).

The region spanning leucine 4–alanine 207 is the ABC transporter domain. An ATP-binding site is contributed by glycine 36 to threonine 43.

The protein belongs to the ABC transporter superfamily. CcmA exporter (TC 3.A.1.107) family. The complex is composed of two ATP-binding proteins (CcmA) and two transmembrane proteins (CcmB).

The protein localises to the cell inner membrane. It catalyses the reaction heme b(in) + ATP + H2O = heme b(out) + ADP + phosphate + H(+). Part of the ABC transporter complex CcmAB involved in the biogenesis of c-type cytochromes; once thought to export heme, this seems not to be the case, but its exact role is uncertain. Responsible for energy coupling to the transport system. This Escherichia coli O6:H1 (strain CFT073 / ATCC 700928 / UPEC) protein is Cytochrome c biogenesis ATP-binding export protein CcmA.